A 224-amino-acid polypeptide reads, in one-letter code: Ethylene-inducing xylanase 5 (224 aa).

Positions 1-16 (MLKSLVVLLLTSRVIA) are cleaved as a signal peptide. The GH11 domain maps to 32–218 (QATPNSQGTH…SSGFAEMTVA (187 aa)). An N-linked (GlcNAc...) asparagine glycan is attached at N88. E117 (nucleophile) is an active-site residue. E205 acts as the Proton donor in catalysis.

The protein belongs to the glycosyl hydrolase 11 (cellulase G) family.

It catalyses the reaction Endohydrolysis of (1-&gt;4)-beta-D-xylosidic linkages in xylans.. The protein operates within glycan degradation; xylan degradation. Functionally, endo-1,4-beta-xylanase involved in the hydrolysis of xylan, a major structural heterogeneous polysaccharide found in plant biomass representing the second most abundant polysaccharide in the biosphere, after cellulose. May act as an elicitor of plant defense responses in certain plants but does not exhibit any cell death when transiently expressed in N.benthamiana. In Verticillium dahliae (strain VdLs.17 / ATCC MYA-4575 / FGSC 10137) (Verticillium wilt), this protein is Ethylene-inducing xylanase 5.